We begin with the raw amino-acid sequence, 215 residues long: Phosphoserine phosphatase (215 aa).

Asp11 acts as the Nucleophile in catalysis. Asp11 and Asp13 together coordinate Mg(2+). The active-site Proton donor is Asp13. Residues Glu20, Arg56, 99-100, and Lys144 each bind substrate; that span reads SG. Position 167 (Asp167) interacts with Mg(2+). Residue Asn170 coordinates substrate.

Belongs to the HAD-like hydrolase superfamily. SerB family. Requires Mg(2+) as cofactor.

It catalyses the reaction O-phospho-L-serine + H2O = L-serine + phosphate. The enzyme catalyses O-phospho-D-serine + H2O = D-serine + phosphate. Its pathway is amino-acid biosynthesis; L-serine biosynthesis; L-serine from 3-phospho-D-glycerate: step 3/3. The chain is Phosphoserine phosphatase from Streptococcus thermophilus (strain ATCC BAA-250 / LMG 18311).